A 312-amino-acid chain; its full sequence is Olfactory receptor 867 (312 aa).

Topologically, residues 1–6 (MILNCN) are extracellular. The helical transmembrane segment at 7 to 30 (PFSGLFLSMYLVTVLGNLLIILAV) threads the bilayer. The Cytoplasmic portion of the chain corresponds to 31–38 (SSNSHLHN). Residues 39-60 (LMYFFLSNLSFVDICFISTTIP) form a helical membrane-spanning segment. The Extracellular segment spans residues 61–81 (KMLVNIHSQTKDISYIECLSQ). A disulfide bridge links cysteine 78 with cysteine 160. Residues 82–101 (VYFLTTFGGMDNFLLTLMAC) traverse the membrane as a helical segment. The Cytoplasmic segment spans residues 102–120 (DRYVAICHPLNYTVIMNLQ). A helical membrane pass occupies residues 121 to 139 (LCALLILMFWLIMFCVSLI). Residues 140–177 (HVLLMNELNFSRGTEIPHFFCELAQVLKVANSDTHINN) lie on the Extracellular side of the membrane. N-linked (GlcNAc...) asparagine glycosylation occurs at asparagine 148. Residues 178–200 (VFMYVVTSLLGLIPMTGILMSYS) form a helical membrane-spanning segment. Residues 201–217 (QIASSLLKMSSSVSKYK) are Cytoplasmic-facing. The chain crosses the membrane as a helical span at residues 218-241 (AFSTCGSHLCVVSLFYGSATIVYF). The Extracellular segment spans residues 242–253 (CSSVLHSTHKKM). A helical transmembrane segment spans residues 254–273 (IASLMYTVISPMLNPFIYSL). The Cytoplasmic segment spans residues 274 to 312 (RNKDVKGALGKLFIRVASCPLWSKDFRPKFILKPERQSL).

It belongs to the G-protein coupled receptor 1 family. Epithelium of the tongue; including the taste buds.

It localises to the cell membrane. Its function is as follows. Possible olfactory or taste receptor. The protein is Olfactory receptor 867 (Olr867) of Rattus norvegicus (Rat).